The primary structure comprises 433 residues: GTPase Obg (433 aa).

Positions 2–160 constitute an Obg domain; that stretch reads PTFVDQTKIE…RVLRLELKLL (159 aa). The OBG-type G domain occupies 161–334; that stretch reads ADVGLVGFPS…LMNDTATLVE (174 aa). GTP contacts are provided by residues 167 to 174, 192 to 196, 214 to 217, 284 to 287, and 315 to 317; these read GFPSVGKS, FTTLT, DLPG, SQMD, and SSV. Mg(2+) contacts are provided by Ser-174 and Thr-194. The OCT domain maps to 355-433; the sequence is YKAPQRNEFM…IGKFVFEFVQ (79 aa).

It belongs to the TRAFAC class OBG-HflX-like GTPase superfamily. OBG GTPase family. Monomer. Mg(2+) is required as a cofactor.

Its subcellular location is the cytoplasm. Its function is as follows. An essential GTPase which binds GTP, GDP and possibly (p)ppGpp with moderate affinity, with high nucleotide exchange rates and a fairly low GTP hydrolysis rate. Plays a role in control of the cell cycle, stress response, ribosome biogenesis and in those bacteria that undergo differentiation, in morphogenesis control. The protein is GTPase Obg of Lactobacillus acidophilus (strain ATCC 700396 / NCK56 / N2 / NCFM).